Consider the following 108-residue polypeptide: Competence protein ComGC (108 aa).

The first 13 residues, 1–13 (MKKMMTFLKKAKV), serve as a signal peptide directing secretion. Residues 14–39 (KAFTLVEMLVVLLIISVLFLLFVPNL) form a may be involved in polymerization of ComGC region. Phe16 is modified (N-methylphenylalanine). A helical transmembrane segment spans residues 16 to 36 (FTLVEMLVVLLIISVLFLLFV).

It belongs to the ComGC family. In terms of assembly, the transformation pili are flexible filaments, consisting mainly of the major pilin ComGC and smaller amounts of the minor pilins, including at least ComGD, ComGF and ComGG, and perhaps ComGE. Homodimer. Forms higher-order multimers. Interacts with ComGG; the interaction is probably direct. Post-translationally, undergoes proteolytic cleavage.

The protein localises to the cell membrane. It localises to the cell surface. It is found in the fimbrium. Its subcellular location is the secreted. Functionally, major component of the type IV-like pilus (T4P) that plays a role in transformation. Transformation pili are dynamically extended and retracted, perhaps thereby promoting DNA uptake and transformation. Required for transformation. Required for DNA binding. This chain is Competence protein ComGC, found in Streptococcus pneumoniae (strain ATCC BAA-255 / R6).